A 249-amino-acid polypeptide reads, in one-letter code: Small ribosomal subunit protein uS2 (249 aa).

It belongs to the universal ribosomal protein uS2 family.

In Listeria innocua serovar 6a (strain ATCC BAA-680 / CLIP 11262), this protein is Small ribosomal subunit protein uS2.